The following is a 393-amino-acid chain: Na(+)/H(+) antiporter NhaA 1 (393 aa).

A run of 11 helical transmembrane segments spans residues 23 to 43, 58 to 78, 96 to 116, 126 to 146, 155 to 175, 178 to 198, 224 to 244, 265 to 285, 298 to 318, 334 to 354, and 367 to 387; these read AGGV…NSPF, LSLT…LVGL, MLPG…FTAF, GWAV…SLLG, VFLA…IAIF, AEIS…LFVM, GVHA…KAAP, VAFI…FAGL, IMLG…WLAI, LYGV…IGLL, and IGVL…LRLV.

Belongs to the NhaA Na(+)/H(+) (TC 2.A.33) antiporter family.

Its subcellular location is the cell inner membrane. It carries out the reaction Na(+)(in) + 2 H(+)(out) = Na(+)(out) + 2 H(+)(in). Na(+)/H(+) antiporter that extrudes sodium in exchange for external protons. The protein is Na(+)/H(+) antiporter NhaA 1 of Brucella anthropi (strain ATCC 49188 / DSM 6882 / CCUG 24695 / JCM 21032 / LMG 3331 / NBRC 15819 / NCTC 12168 / Alc 37) (Ochrobactrum anthropi).